The following is a 342-amino-acid chain: Dihydroorotate dehydrogenase (quinone) (342 aa).

Residues 65–69 and T89 each bind FMN; that span reads AGLDK. Position 69 (K69) interacts with substrate. Residue 114 to 118 coordinates substrate; sequence NRMGF. FMN is bound by residues N142 and N175. Residue N175 coordinates substrate. The Nucleophile role is filled by S178. Substrate is bound at residue N180. Positions 220 and 248 each coordinate FMN. Residue 249-250 coordinates substrate; the sequence is NT. FMN-binding positions include G271, G300, and 321-322; that span reads YT.

Belongs to the dihydroorotate dehydrogenase family. Type 2 subfamily. In terms of assembly, monomer. FMN serves as cofactor.

It is found in the cell membrane. It catalyses the reaction (S)-dihydroorotate + a quinone = orotate + a quinol. Its pathway is pyrimidine metabolism; UMP biosynthesis via de novo pathway; orotate from (S)-dihydroorotate (quinone route): step 1/1. Functionally, catalyzes the conversion of dihydroorotate to orotate with quinone as electron acceptor. This chain is Dihydroorotate dehydrogenase (quinone), found in Burkholderia pseudomallei (strain 668).